Here is a 582-residue protein sequence, read N- to C-terminus: Membrane protein insertase YidC (582 aa).

Residues 3 to 23 (IQRALVITGIAVVSYLMIQAW) traverse the membrane as a helical segment. The interval 38-92 (QVAEQGNSSSSDSADLPSVQSQTDNSIPSAQSDNDLPSVSPADIAQPTPSSQRIE) is disordered. The segment covering 45 to 58 (SSSSDSADLPSVQS) has biased composition (low complexity). Residues 59–74 (QTDNSIPSAQSDNDLP) show a composition bias toward polar residues. 5 helical membrane-spanning segments follow: residues 357–377 (TVDYGWLWFISQPIFALLVFL), 394–414 (GVGNWGVAIILLTLIIKAIFF), 464–484 (LGGCLPMLVQMPVFIALYYVL), 495–515 (FFLWINDLSVMDPYFVLPILM), and 541–561 (MPMIFAVFMLWFPAGLVLYWL).

It belongs to the OXA1/ALB3/YidC family. Type 1 subfamily. Interacts with the Sec translocase complex via SecD. Specifically interacts with transmembrane segments of nascent integral membrane proteins during membrane integration.

It localises to the cell inner membrane. Its function is as follows. Required for the insertion and/or proper folding and/or complex formation of integral membrane proteins into the membrane. Involved in integration of membrane proteins that insert both dependently and independently of the Sec translocase complex, as well as at least some lipoproteins. Aids folding of multispanning membrane proteins. The sequence is that of Membrane protein insertase YidC from Alcanivorax borkumensis (strain ATCC 700651 / DSM 11573 / NCIMB 13689 / SK2).